The sequence spans 249 residues: MILCVPGPHPLLAEEKIQRLSLRGIAEDLTEHIMQPLPVPAFPEEPAPTFAAPEPDGSAPQTRDPEEDLLCIAKTFSYLRESGWYWGSITASEAKQHLQKMPEGTFLVRDSTHPSYLFTLSVKTNRGPTNVRIEYADSKFRLDSNYLSKPRILAFPDVVSLIQHYVTSCTTESKSEAPYPPPAPLPPVQKEVAVAAVHLKLLRPLGRRDSIPSLQHLCRLRINRCTTEVERLPLPRRMGDYLKQYPFQL.

Residues 41-64 are disordered; the sequence is AFPEEPAPTFAAPEPDGSAPQTRD. The 82-residue stretch at 84-165 folds into the SH2 domain; it reads WYWGSITASE…PDVVSLIQHY (82 aa). Positions 200 to 248 constitute an SOCS box domain; sequence KLLRPLGRRDSIPSLQHLCRLRINRCTTEVERLPLPRRMGDYLKQYPFQ.

It functions in the pathway protein modification; protein ubiquitination. In terms of biological role, SOCS family proteins form part of a classical negative feedback system that regulates cytokine signal transduction. CIS is involved in the negative regulation of cytokines that signal through the JAK-STAT5 pathway such as erythropoietin, prolactin and interleukin 3 (IL3) receptor. Inhibits STAT5 trans-activation by suppressing its tyrosine phosphorylation. May be a substrate-recognition component of a SCF-like ECS (Elongin BC-CUL2/5-SOCS-box protein) E3 ubiquitin-protein ligase complex which mediates the ubiquitination and subsequent proteasomal degradation of target proteins. This chain is Cytokine-inducible SH2-containing protein (CISH), found in Gallus gallus (Chicken).